Consider the following 147-residue polypeptide: MVHLTPEEKNAVTALWGKVNVDEVGGEALGRLLVVYPWTQRFFDSFGDLSSPAAVMGNPKVKAHGKKVLGAFSDGLNHLDNLKGTFAQLSELHCDKLHVDPENFKLLGNVLVCVLAHHFGKEFTPQVQAAYQKVVAGVANALAHKYH.

V2 is modified (N-acetylvaline). In terms of domain architecture, Globin spans 3–147 (HLTPEEKNAV…VANALAHKYH (145 aa)). T13 is modified (phosphothreonine). S45 carries the phosphoserine modification. Residue K60 is modified to N6-acetyllysine. Position 64 (H64) interacts with heme b. Position 83 is an N6-acetyllysine (K83). Residue H93 participates in heme b binding. At C94 the chain carries S-nitrosocysteine. Position 145 is an N6-acetyllysine (K145).

It belongs to the globin family. Heterotetramer of two alpha chains and two beta chains. Red blood cells.

Its function is as follows. Involved in oxygen transport from the lung to the various peripheral tissues. The sequence is that of Hemoglobin subunit beta (HBB) from Papio anubis (Olive baboon).